The chain runs to 109 residues: Protein ELF4-LIKE 3 (109 aa).

Residues 88–109 (SMEASSEGDSSEGRGNRRIRPA) form a disordered region.

The protein belongs to the EARLY FLOWERING 4 family. In terms of assembly, homodimer.

It localises to the nucleus. Functionally, component of the central CCA1/LHY-TOC1 feedback loop in the circadian clock that promotes clock accuracy and is required for sustained rhythms in the absence of daily light/dark cycles. The chain is Protein ELF4-LIKE 3 (EFL3) from Arabidopsis thaliana (Mouse-ear cress).